We begin with the raw amino-acid sequence, 57 residues long: Sec-independent protein translocase protein TatAy (57 aa).

Residues 1–21 (MPIGPGSLAVIAIVALIIFGP) form a helical membrane-spanning segment.

Belongs to the TatA/E family. As to quaternary structure, forms a complex with TatCy. Two types of complexes exist: one composed of TatAy and TatCy, and another composed only of TatAy. Cytosolic TatA forms large complexes or aggregates.

It localises to the cell membrane. The protein localises to the cytoplasm. The protein resides in the cytosol. Its function is as follows. Part of the twin-arginine translocation (Tat) system that transports large folded proteins containing a characteristic twin-arginine motif in their signal peptide across membranes. TatA could form the protein-conducting channel of the Tat system. Required for YwbN secretion. This chain is Sec-independent protein translocase protein TatAy, found in Bacillus subtilis (strain 168).